Consider the following 170-residue polypeptide: 3-hydroxydecanoyl-[acyl-carrier-protein] dehydratase (170 aa).

Residue histidine 69 is part of the active site.

It belongs to the thioester dehydratase family. FabA subfamily. In terms of assembly, homodimer.

The protein resides in the cytoplasm. It carries out the reaction a (3R)-hydroxyacyl-[ACP] = a (2E)-enoyl-[ACP] + H2O. It catalyses the reaction (3R)-hydroxydecanoyl-[ACP] = (2E)-decenoyl-[ACP] + H2O. The enzyme catalyses (2E)-decenoyl-[ACP] = (3Z)-decenoyl-[ACP]. It participates in lipid metabolism; fatty acid biosynthesis. Functionally, necessary for the introduction of cis unsaturation into fatty acids. Catalyzes the dehydration of (3R)-3-hydroxydecanoyl-ACP to E-(2)-decenoyl-ACP and then its isomerization to Z-(3)-decenoyl-ACP. Can catalyze the dehydratase reaction for beta-hydroxyacyl-ACPs with saturated chain lengths up to 16:0, being most active on intermediate chain length. The protein is 3-hydroxydecanoyl-[acyl-carrier-protein] dehydratase of Caulobacter vibrioides (strain ATCC 19089 / CIP 103742 / CB 15) (Caulobacter crescentus).